A 505-amino-acid polypeptide reads, in one-letter code: RNA-splicing ligase RtcB homolog (505 aa).

Residues D119, C122, H227, and H259 each contribute to the Mn(2+) site. Residue 226-230 coordinates GMP; the sequence is NHYAE. Residue S300 is modified to Phosphoserine. Position 353 (H353) interacts with Mn(2+). GMP contacts are provided by residues 353 to 354, 402 to 405, S409, and 428 to 431; these read HN, GGTM, and HGAG. H428 (GMP-histidine intermediate) is an active-site residue. K496 participates in a covalent cross-link: Glycyl lysine isopeptide (Lys-Gly) (interchain with G-Cter in SUMO2). K504 is a binding site for GMP.

Belongs to the RtcB family. Catalytic component of the tRNA-splicing ligase complex. Mn(2+) is required as a cofactor.

The protein localises to the nucleus. Its subcellular location is the cytoplasm. The enzyme catalyses a 3'-end 3'-phospho-ribonucleotide-RNA + a 5'-end dephospho-ribonucleoside-RNA + GTP = a ribonucleotidyl-ribonucleotide-RNA + GMP + diphosphate. It catalyses the reaction a 3'-end 2',3'-cyclophospho-ribonucleotide-RNA + a 5'-end dephospho-ribonucleoside-RNA + GTP + H2O = a ribonucleotidyl-ribonucleotide-RNA + GMP + diphosphate + H(+). Functionally, catalytic subunit of the tRNA-splicing ligase complex that acts by directly joining spliced tRNA halves to mature-sized tRNAs by incorporating the precursor-derived splice junction phosphate into the mature tRNA as a canonical 3',5'-phosphodiester. May act as an RNA ligase with broad substrate specificity, and may function toward other RNAs. This chain is RNA-splicing ligase RtcB homolog, found in Bos taurus (Bovine).